Here is a 68-residue protein sequence, read N- to C-terminus: U2-agatoxin-Ao1u (68 aa).

The first 20 residues, 1-20, serve as a signal peptide directing secretion; that stretch reads MKAIISLLLISAMVFSMIEA. The propeptide occupies 21-34; it reads VPLEEGLQLFEGER. 3 disulfides stabilise this stretch: Cys-36/Cys-52, Cys-43/Cys-57, and Cys-51/Cys-67.

It belongs to the neurotoxin 01 (U2-agtx) family. Expressed by the venom gland.

Its subcellular location is the secreted. Functionally, insect active toxin causing rapid but reversible paralysis in crickets. No activity shown in mammals. Does not show effect on mammalian voltage-gated calcium channels. In Agelena orientalis (Funnel-web spider), this protein is U2-agatoxin-Ao1u.